Consider the following 231-residue polypeptide: Cytochrome c oxidase assembly factor 7 (231 aa).

Residue alanine 2 is modified to N-acetylalanine. 5 Sel1-like repeats span residues 34-66 (PEGCYRLVDYLEGIQKNFDEAAKVLKFNCEKYG), 68-104 (GDSCYKLGAYYVTGKGGLTQDLKAASSCFLMACEKPG), 108-146 (VESCHNVGLLAHDGQVNEDGQPDLGKARDYYSRACDGGY), 147-183 (AASCFNLSAMFLQGAPGFPKDMGLACKYSMKACDLGH), and 184-219 (VWACANASRMYKLGDGVDKDEAKAEVLKNRARQLHK).

Belongs to the hcp beta-lactamase family. As to quaternary structure, interacts with CHCHD4/MIA40 through transient intermolecular disulfide bonds.

The protein resides in the mitochondrion intermembrane space. Required for assembly of mitochondrial respiratory chain complex I and complex IV. This chain is Cytochrome c oxidase assembly factor 7 (Coa7), found in Mus musculus (Mouse).